The following is a 334-amino-acid chain: Protein-methionine-sulfoxide reductase catalytic subunit MsrP (334 aa).

Residues 1 to 44 constitute a signal peptide (tat-type signal); the sequence is MKKNQFLKESDVTAESVFFMKRRQVLKALGISAAALSLPHAAHA. Residues N88, 91-92, C146, T181, N233, R238, and 249-251 each bind Mo-molybdopterin; these read YE and GIK.

Belongs to the MsrP family. As to quaternary structure, heterodimer of a catalytic subunit (MsrP) and a heme-binding subunit (MsrQ). Requires Mo-molybdopterin as cofactor. In terms of processing, predicted to be exported by the Tat system. The position of the signal peptide cleavage has not been experimentally proven.

Its subcellular location is the periplasm. It carries out the reaction L-methionyl-[protein] + a quinone + H2O = L-methionyl-(S)-S-oxide-[protein] + a quinol. The catalysed reaction is L-methionyl-[protein] + a quinone + H2O = L-methionyl-(R)-S-oxide-[protein] + a quinol. Functionally, part of the MsrPQ system that repairs oxidized periplasmic proteins containing methionine sulfoxide residues (Met-O), using respiratory chain electrons. Thus protects these proteins from oxidative-stress damage caused by reactive species of oxygen and chlorine generated by the host defense mechanisms. MsrPQ is essential for the maintenance of envelope integrity under bleach stress, rescuing a wide series of structurally unrelated periplasmic proteins from methionine oxidation, including the primary periplasmic chaperone SurA and the lipoprotein Pal. The catalytic subunit MsrP is non-stereospecific, being able to reduce both (R-) and (S-) diastereoisomers of methionine sulfoxide. This Escherichia coli O81 (strain ED1a) protein is Protein-methionine-sulfoxide reductase catalytic subunit MsrP.